The primary structure comprises 124 residues: Fluoride-specific ion channel FluC (124 aa).

A run of 4 helical transmembrane segments spans residues 4–24, 36–56, 63–83, and 100–120; these read YLVIAVGGSIGAILRYLTGVY, GTLIVNVVGSFILSFFMILFL, PLWRLFVAVGFCGSYTTLSSI, and LLNIALNFGLSFLSAFAGIVL. 2 residues coordinate Na(+): Gly-75 and Thr-78.

It belongs to the fluoride channel Fluc/FEX (TC 1.A.43) family.

Its subcellular location is the cell inner membrane. It catalyses the reaction fluoride(in) = fluoride(out). With respect to regulation, na(+) is not transported, but it plays an essential structural role and its presence is essential for fluoride channel function. In terms of biological role, fluoride-specific ion channel. Important for reducing fluoride concentration in the cell, thus reducing its toxicity. This is Fluoride-specific ion channel FluC from Sulfurihydrogenibium sp. (strain YO3AOP1).